The primary structure comprises 128 residues: MSCSSLCAPACVATPTPLADSCNEPCVRQCPDSTVVIQPPATVVTFPGPILSSFPQYAAVGSAGVPAVGSGMGGTFGRGAGFGGYGGLGGYGGYGGLGGYGGYGGFGSCGYGGFGRGYRSLLGSCGPC.

Tandem repeats lie at residues 83-91 (GGYGGLGGY) and 92-100 (GGYGGLGGY). The 3 X 9 AA tandem repeats, Gly-rich stretch occupies residues 83 to 104 (GGYGGLGGYGGYGGLGGYGGYG). Residues 101-109 (GGYGGFGSC) form a 3; approximate repeat.

Belongs to the avian keratin family. As to expression, abundantly expressed in the claw and at a low level in feather tissue.

The polypeptide is Claw keratin (CKER1) (Gallus gallus (Chicken)).